We begin with the raw amino-acid sequence, 344 residues long: GTPase Obg (344 aa).

Polar residues predominate over residues 1-12 (MFVDSASFSVSS). Residues 1–36 (MFVDSASFSVSSGKGGPGCASFRREKHVPLGGPDGG) are disordered. The region spanning 1–158 (MFVDSASFSV…RNIRLELKLI (158 aa)) is the Obg domain. Residues 159-341 (ADVGLVGFPN…LKFGLLEILK (183 aa)) form the OBG-type G domain. Residues 165 to 172 (GFPNVGKS), 190 to 194 (FTTLT), 212 to 215 (DIPG), 280 to 283 (TRLD), and 322 to 324 (SSV) contribute to the GTP site. Mg(2+) contacts are provided by Ser172 and Thr192.

The protein belongs to the TRAFAC class OBG-HflX-like GTPase superfamily. OBG GTPase family. As to quaternary structure, monomer. Mg(2+) serves as cofactor.

Its subcellular location is the cytoplasm. In terms of biological role, an essential GTPase which binds GTP, GDP and possibly (p)ppGpp with moderate affinity, with high nucleotide exchange rates and a fairly low GTP hydrolysis rate. Plays a role in control of the cell cycle, stress response, ribosome biogenesis and in those bacteria that undergo differentiation, in morphogenesis control. The protein is GTPase Obg of Campylobacter fetus subsp. fetus (strain 82-40).